We begin with the raw amino-acid sequence, 357 residues long: MGTIQEAGKKTDVGVREIAEAPELGAALRHGELELKEEWQDEEFPRLLPEEAGTSEDPEDPKGDSQAAAGTPSTLALCGQRPMRKRLSAPELRLSLTKGPGNDGASPTQSAPSSPDGSSDLEIDELETPSDSEQLDSGHEFEWEDELPRAEGLGTSETAERLGRGCMWDVTGEDGHHWRVFRMGPREQRVDMTVIEPYKKVLSHGGYHGDGLNAVILFASCYLPRSSIPNYTYVMEHLFRYMVGTLELLVAENYLLVHLSGGTSRAQVPPLSWIRQCYRTLDRRLRKNLRALVVVHATWYVKAFLALLRPFISSKFTRKIRFLDSLGELAQLISLDQVHIPEAVRQLDRDLHGSGGT.

Residues 32–49 (ELELKEEWQDEEFPRLLP) are compositionally biased toward basic and acidic residues. Residues 32–156 (ELELKEEWQD…LPRAEGLGTS (125 aa)) are disordered. Residues 105–117 (ASPTQSAPSSPDG) show a composition bias toward polar residues. Acidic residues predominate over residues 119–134 (SDLEIDELETPSDSEQ). Residues 136–149 (DSGHEFEWEDELPR) show a composition bias toward basic and acidic residues. The CRAL-TRIO domain maps to 191–352 (DMTVIEPYKK…AVRQLDRDLH (162 aa)).

As to quaternary structure, homodimer. Interacts with BCL2, ARHGAP1, MIF and GFER. In terms of tissue distribution, isoform 2 is expressed in placenta and lung.

In terms of biological role, may be a bridge molecule between BCL2 and ARHGAP1/CDC42 in promoting cell death. The polypeptide is Bcl-2/adenovirus E1B 19 kDa-interacting protein 2-like protein (BNIPL) (Homo sapiens (Human)).